A 484-amino-acid chain; its full sequence is Protein nucleotidyltransferase YdiU (484 aa).

Residues Gly-81, Gly-83, Arg-84, Lys-103, Asp-115, Gly-116, Arg-166, and Arg-173 each contribute to the ATP site. Asp-244 acts as the Proton acceptor in catalysis. Residues Asn-245 and Asp-254 each coordinate Mg(2+). ATP is bound at residue Asp-254.

The protein belongs to the SELO family. Mg(2+) serves as cofactor. Mn(2+) is required as a cofactor.

It carries out the reaction L-seryl-[protein] + ATP = 3-O-(5'-adenylyl)-L-seryl-[protein] + diphosphate. The catalysed reaction is L-threonyl-[protein] + ATP = 3-O-(5'-adenylyl)-L-threonyl-[protein] + diphosphate. It catalyses the reaction L-tyrosyl-[protein] + ATP = O-(5'-adenylyl)-L-tyrosyl-[protein] + diphosphate. The enzyme catalyses L-histidyl-[protein] + UTP = N(tele)-(5'-uridylyl)-L-histidyl-[protein] + diphosphate. It carries out the reaction L-seryl-[protein] + UTP = O-(5'-uridylyl)-L-seryl-[protein] + diphosphate. The catalysed reaction is L-tyrosyl-[protein] + UTP = O-(5'-uridylyl)-L-tyrosyl-[protein] + diphosphate. Nucleotidyltransferase involved in the post-translational modification of proteins. It can catalyze the addition of adenosine monophosphate (AMP) or uridine monophosphate (UMP) to a protein, resulting in modifications known as AMPylation and UMPylation. The polypeptide is Protein nucleotidyltransferase YdiU (Shewanella baltica (strain OS185)).